The sequence spans 1179 residues: Tubulin glycylase 3B (1179 aa).

Positions 177-199 are enriched in polar residues; it reads NKGQTNNSNRENGGNFHSEQSPK. 4 disordered regions span residues 177-208, 250-278, 592-625, and 853-890; these read NKGQTNNSNRENGGNFHSEQSPKSAAGSVVSG, QQPQPLSQQHSNQSSQSSNPQSQSPLPLS, KVLSNTKSKDEEESSDDDETPVKSKSNNQNAVQQ, and QKQHMNKRKNSHRISVNHNHNDPIEEESAQSSTSLKQD. Residues 592–601 show a composition bias toward basic and acidic residues; it reads KVLSNTKSKD. Polar residues-rich tracts occupy residues 614–625 and 881–890; these read KSKSNNQNAVQQ and AQSSTSLKQD. Residues 790 to 1152 form the TTL domain; that stretch reads FIDFYETVDF…SMAKKGTKKN (363 aa). ATP contacts are provided by residues 965–968, lysine 978, and aspartate 980; that span reads QKYI.

It localises to the cell projection. Its subcellular location is the cilium. It is found in the cytoplasm. The protein localises to the cytoskeleton. The protein resides in the cilium axoneme. Functionally, polyglycylase which modifies tubulin, generating side chains of glycine on the gamma-carboxyl groups of specific glutamate residues within the C-terminal tail of tubulin. Polyglycylates tubulin, with a preference for alpha-tubulin toward beta-tubulin. In Tetrahymena thermophila (strain SB210), this protein is Tubulin glycylase 3B (TTLL3B).